The chain runs to 91 residues: Small ribosomal subunit protein uS19 (91 aa).

The protein belongs to the universal ribosomal protein uS19 family.

Protein S19 forms a complex with S13 that binds strongly to the 16S ribosomal RNA. This chain is Small ribosomal subunit protein uS19, found in Sulfurimonas denitrificans (strain ATCC 33889 / DSM 1251) (Thiomicrospira denitrificans (strain ATCC 33889 / DSM 1251)).